The following is a 394-amino-acid chain: MTPQVLTILGSTGSIGESTLDVVSRHPEKFRVFALAGHKQVEKLAAQCQTFRPEYAVVADAEHAARLEALLKRDGTATQVLHGAQALVDVASADEVSGVMCAIVGAAGLPSALAAAQKGKTIYLANKETLVVSGALFMETARANGAAVLPVDSEHNAIFQVLPRDYTDRLNEHGIDSIILTASGGPFLTTDLSTFDSITPEQAVKHPNWRMGRKISVDSATMANKGLELIEAHWLFNCPPDKLEVVIHPQSVIHSMVRYRDGSVLAQLGNPDMRTPIAYCLGLPERIDSGVGKLDFGALSALTFQKPDFGRFPCLKFAYETINAGGAAPCVLNAANETAVAAFLDGQIKFTDIAKTVAHCLAQDFSNGMGDIEGLLAQDARTRAQARAFIGTLR.

NADPH-binding residues include threonine 12, glycine 13, serine 14, isoleucine 15, lysine 39, glutamine 40, and asparagine 126. Residue lysine 127 coordinates 1-deoxy-D-xylulose 5-phosphate. Position 128 (glutamate 128) interacts with NADPH. Mn(2+) is bound at residue aspartate 152. Serine 153, glutamate 154, serine 183, and histidine 206 together coordinate 1-deoxy-D-xylulose 5-phosphate. A Mn(2+)-binding site is contributed by glutamate 154. Glycine 212 serves as a coordination point for NADPH. 1-deoxy-D-xylulose 5-phosphate-binding residues include serine 219, asparagine 224, lysine 225, and glutamate 228. Residue glutamate 228 coordinates Mn(2+).

The protein belongs to the DXR family. It depends on Mg(2+) as a cofactor. Mn(2+) serves as cofactor.

It carries out the reaction 2-C-methyl-D-erythritol 4-phosphate + NADP(+) = 1-deoxy-D-xylulose 5-phosphate + NADPH + H(+). Its pathway is isoprenoid biosynthesis; isopentenyl diphosphate biosynthesis via DXP pathway; isopentenyl diphosphate from 1-deoxy-D-xylulose 5-phosphate: step 1/6. In terms of biological role, catalyzes the NADPH-dependent rearrangement and reduction of 1-deoxy-D-xylulose-5-phosphate (DXP) to 2-C-methyl-D-erythritol 4-phosphate (MEP). This Neisseria gonorrhoeae (strain ATCC 700825 / FA 1090) protein is 1-deoxy-D-xylulose 5-phosphate reductoisomerase.